Here is a 430-residue protein sequence, read N- to C-terminus: Serine--tRNA ligase (430 aa).

Residue 237–239 (TAE) participates in L-serine binding. Residue 268–270 (RSE) participates in ATP binding. Residue Glu-291 participates in L-serine binding. 355–358 (EISS) contributes to the ATP binding site. L-serine is bound at residue Ser-391.

This sequence belongs to the class-II aminoacyl-tRNA synthetase family. Type-1 seryl-tRNA synthetase subfamily. As to quaternary structure, homodimer. The tRNA molecule binds across the dimer.

The protein resides in the cytoplasm. The catalysed reaction is tRNA(Ser) + L-serine + ATP = L-seryl-tRNA(Ser) + AMP + diphosphate + H(+). It catalyses the reaction tRNA(Sec) + L-serine + ATP = L-seryl-tRNA(Sec) + AMP + diphosphate + H(+). The protein operates within aminoacyl-tRNA biosynthesis; selenocysteinyl-tRNA(Sec) biosynthesis; L-seryl-tRNA(Sec) from L-serine and tRNA(Sec): step 1/1. In terms of biological role, catalyzes the attachment of serine to tRNA(Ser). Is also able to aminoacylate tRNA(Sec) with serine, to form the misacylated tRNA L-seryl-tRNA(Sec), which will be further converted into selenocysteinyl-tRNA(Sec). The polypeptide is Serine--tRNA ligase (Shigella boydii serotype 18 (strain CDC 3083-94 / BS512)).